The primary structure comprises 190 residues: Ribosome maturation factor RimP (190 aa).

Positions 159 to 190 (ELELAGGIPEGRVAPADADASEDEEVVEGLDK) are disordered. Residues 177–190 (DASEDEEVVEGLDK) are compositionally biased toward acidic residues.

It belongs to the RimP family.

It is found in the cytoplasm. In terms of biological role, required for maturation of 30S ribosomal subunits. The polypeptide is Ribosome maturation factor RimP (Rhodococcus opacus (strain B4)).